We begin with the raw amino-acid sequence, 48 residues long: Large ribosomal subunit protein bL32 (48 aa).

The span at 1-20 shows a compositional bias: basic residues; sequence MAVPKRRVSKTRAAKRRTHY. Positions 1–48 are disordered; sequence MAVPKRRVSKTRAAKRRTHYKVSLPIPVKDKDGSWKLPHRINTKTGEY.

It belongs to the bacterial ribosomal protein bL32 family.

In Campylobacter hominis (strain ATCC BAA-381 / DSM 21671 / CCUG 45161 / LMG 19568 / NCTC 13146 / CH001A), this protein is Large ribosomal subunit protein bL32.